The sequence spans 112 residues: Large ribosomal subunit protein eL30 (112 aa).

This sequence belongs to the eukaryotic ribosomal protein eL30 family. As to expression, expressed in roots and leaves.

This chain is Large ribosomal subunit protein eL30, found in Triticum aestivum (Wheat).